The sequence spans 427 residues: Sialic acid TRAP transporter large permease protein SiaM (427 aa).

12 consecutive transmembrane segments (helical) span residues 11 to 31 (LLFA…AFLI), 52 to 72 (FTLL…SAGI), 82 to 102 (SLVG…SLLF), 140 to 160 (ASCI…YGVV), 165 to 185 (IGAL…ALMV), 214 to 234 (AFLS…GKFT), 246 to 266 (ALFL…IEIL), 270 to 290 (VNTT…GWIV), 301 to 321 (DYFL…NLLL), 322 to 342 (LFLG…PFLV), 348 to 368 (VGID…IGIL), and 394 to 414 (VLPL…FPQF).

It belongs to the TRAP transporter large permease family. In terms of assembly, the complex comprises the extracytoplasmic solute receptor protein SiaP, and the two transmembrane proteins SiaQ and SiaM. SiaQ and SiaM form a tight 1:1 complex.

The protein resides in the cell inner membrane. Part of the tripartite ATP-independent periplasmic (TRAP) transport system SiaPQM that catalyzes unidirectional Na(+)-dependent sialic acid uptake. This is Sialic acid TRAP transporter large permease protein SiaM from Vibrio cholerae serotype O1 (strain ATCC 39315 / El Tor Inaba N16961).